Consider the following 142-residue polypeptide: ATP synthase epsilon chain (142 aa).

The protein belongs to the ATPase epsilon chain family. F-type ATPases have 2 components, CF(1) - the catalytic core - and CF(0) - the membrane proton channel. CF(1) has five subunits: alpha(3), beta(3), gamma(1), delta(1), epsilon(1). CF(0) has three main subunits: a, b and c.

Its subcellular location is the cell inner membrane. Produces ATP from ADP in the presence of a proton gradient across the membrane. The polypeptide is ATP synthase epsilon chain (Shewanella sp. (strain ANA-3)).